A 256-amino-acid chain; its full sequence is MAQLLRRHLPVILSLILFLSKATADANFTVSRAAYYPNSDIKGTENGACEYGAFGATLNNGDVSASASLYRDGVGCGACYQVRCTNPYYCSPNGVTIVITDSGASDGTDFILSQHAFTRMAQSTDAGTALLTLGVVGIEYRRVSCTYPNKNIVFKITESSNFPNYLEFEIWYQQGNQDIIAVQLCETVNLTCQLLSRTHGAVWAAVSPPSGPLSIRMLFSSGAPRGGDTWLVPTNIVPQNWTAGATYDSGVQVQLQ.

The first 24 residues, 1 to 24, serve as a signal peptide directing secretion; the sequence is MAQLLRRHLPVILSLILFLSKATA. An N-linked (GlcNAc...) asparagine glycan is attached at Asn27. Residues 46 to 150 form the Expansin-like EG45 domain; the sequence is NGACEYGAFG…RRVSCTYPNK (105 aa). In terms of domain architecture, Expansin-like CBD spans 164–249; that stretch reads NYLEFEIWYQ…NWTAGATYDS (86 aa). N-linked (GlcNAc...) asparagine glycans are attached at residues Asn189 and Asn240.

This sequence belongs to the expansin family. Expansin-like B subfamily.

Its subcellular location is the secreted. In Oryza sativa subsp. japonica (Rice), this protein is Expansin-like B1 (EXLB1).